Here is a 216-residue protein sequence, read N- to C-terminus: MAVAPARARSDYDYLIKLLLIGDSGVGKSCLLLRFSDDTFTTSFITTIGIDFKIRTVELDGKRIKLQIWDTAGQERFRTITTAYYRGAMGILLVYDVTDESSFNNIRNWMKNIEQHASDNVNKILVGNKADMDESKRAVPTAKGQALADEYGIKFFETSAKTNLNVENVFMSIAKDIKQRLTETDTKAEPQGIKITKQDTAASSSTAEKSACCSYV.

GTP is bound at residue 22 to 29 (GDSGVGKS). Positions 44-52 (FITTIGIDF) match the Effector region motif. Residues 70 to 74 (DTAGQ), 128 to 131 (NKAD), and 159 to 160 (SA) contribute to the GTP site. The disordered stretch occupies residues 196-216 (TKQDTAASSSTAEKSACCSYV). The span at 200–216 (TAASSSTAEKSACCSYV) shows a compositional bias: low complexity. 2 S-geranylgeranyl cysteine lipidation sites follow: C212 and C213.

Belongs to the small GTPase superfamily. Rab family. In terms of assembly, interacts with PI5K2.

It is found in the golgi apparatus membrane. It localises to the cell membrane. Functionally, involved in membrane trafficking from the Golgi to the plasma membrane. The protein is Ras-related protein RABE1d (RABE1D) of Arabidopsis thaliana (Mouse-ear cress).